Consider the following 152-residue polypeptide: Xanthine-guanine phosphoribosyltransferase (152 aa).

Residues 37 to 38, arginine 69, and 88 to 96 contribute to the 5-phospho-alpha-D-ribose 1-diphosphate site; these read RG and DDLVDTGGT. Arginine 69 is a GMP binding site. Aspartate 89 serves as a coordination point for Mg(2+). Aspartate 92 and isoleucine 135 together coordinate guanine. Xanthine is bound by residues aspartate 92 and isoleucine 135. Residues 92–96 and 134–135 contribute to the GMP site; these read DTGGT and WI.

It belongs to the purine/pyrimidine phosphoribosyltransferase family. XGPT subfamily. Homotetramer. Requires Mg(2+) as cofactor.

It is found in the cell inner membrane. It carries out the reaction GMP + diphosphate = guanine + 5-phospho-alpha-D-ribose 1-diphosphate. The catalysed reaction is XMP + diphosphate = xanthine + 5-phospho-alpha-D-ribose 1-diphosphate. It catalyses the reaction IMP + diphosphate = hypoxanthine + 5-phospho-alpha-D-ribose 1-diphosphate. The protein operates within purine metabolism; GMP biosynthesis via salvage pathway; GMP from guanine: step 1/1. It functions in the pathway purine metabolism; XMP biosynthesis via salvage pathway; XMP from xanthine: step 1/1. Its function is as follows. Purine salvage pathway enzyme that catalyzes the transfer of the ribosyl-5-phosphate group from 5-phospho-alpha-D-ribose 1-diphosphate (PRPP) to the N9 position of the 6-oxopurines guanine and xanthine to form the corresponding ribonucleotides GMP (guanosine 5'-monophosphate) and XMP (xanthosine 5'-monophosphate), with the release of PPi. To a lesser extent, also acts on hypoxanthine. This Serratia proteamaculans (strain 568) protein is Xanthine-guanine phosphoribosyltransferase.